An 876-amino-acid chain; its full sequence is Alanine--tRNA ligase (876 aa).

Residue Lys-74 is modified to N6-acetyllysine. 4 residues coordinate Zn(2+): His-564, His-568, Cys-666, and His-670.

Belongs to the class-II aminoacyl-tRNA synthetase family. Homotetramer. Requires Zn(2+) as cofactor.

The protein localises to the cytoplasm. The enzyme catalyses tRNA(Ala) + L-alanine + ATP = L-alanyl-tRNA(Ala) + AMP + diphosphate. Its function is as follows. Catalyzes the attachment of alanine to tRNA(Ala) in a two-step reaction: alanine is first activated by ATP to form Ala-AMP and then transferred to the acceptor end of tRNA(Ala). Also edits incorrectly charged Ser-tRNA(Ala) and Gly-tRNA(Ala) via its editing domain. This is Alanine--tRNA ligase from Shigella boydii serotype 18 (strain CDC 3083-94 / BS512).